The following is a 741-amino-acid chain: MLACNCIEPQWPADELLMKYQYISDFFIALAYFSIPLELIYFVKKSAVFPYRWVLVQFGAFIVLCGATHLINLWTFSIHSRTVAMVMTTAKVLTAVVSCATALMLVHIIPDLLSVKTRELFLKNKAAELDREMGLIRTQEETGRHVRMLTHEIRSTLDRHTILKTTLVELGRTLALEECALWMPTRTGLELQLSYTLRQQNPVGYTVPIHLPVINQVFSSNRAVKISANSPVAKLRQLAGRHIPGEVVAVRVPLLHLSNFQINDWPELSTKRYALMVLMLPSDSARQWHVHELELVEVVADQVAVALSHAAILEESMRARDLLMEQNIALDLARREAETAIRARNDFLAVMNHEMRTPMHAIIALSSLLQETELTAEQRLMVETILRSSNLLATLINDVLDLSRLEDGSLQLEIATFNLHSVFREVHNMIKPVASIKRLSVTLNIAADLPMYAIGDEKRLMQTILNVVGNAVKFSKEGSISITAFVAKSESLRDFRAPDFFPVQSDNHFYLRVQVKDSGSGINPQDIPKLFTKFAQTQALATRNSGGSGLGLAICKRFVNLMEGHIWIESEGLGKGCTATFIVKLGFPERSNESKLPFAPKLQANHVQTNFPGLKVLVMDDNGVSRSVTKGLLAHLGCDVTAVSLIDELLHVISQEHKVVFMDVSMPGIDGYELAVRIHEKFTKRHERPVLVALTGSIDKITKENCMRVGVDGVILKPVSVDKMRSVLSELLEHRVLFEAM.

A run of 3 helical transmembrane segments spans residues 23-43 (ISDFFIALAYFSIPLELIYFV), 53-73 (WVLVQFGAFIVLCGATHLINL), and 92-112 (VLTAVVSCATALMLVHIIPDL). Cu cation is bound by residues Cys65 and His69. The GAF domain occupies 158–307 (DRHTILKTTL…VVADQVAVAL (150 aa)). A Histidine kinase domain is found at 350-589 (VMNHEMRTPM…TFIVKLGFPE (240 aa)). His353 is subject to Phosphohistidine; by autocatalysis. Residues 615–732 (KVLVMDDNGV…KMRSVLSELL (118 aa)) enclose the Response regulatory domain. Position 663 is a 4-aspartylphosphate (Asp663).

The protein belongs to the ethylene receptor family. As to quaternary structure, homodimer; disulfide-linked. The cofactor is Cu cation. Activation probably requires a transfer of a phosphate group between a His in the transmitter domain and an Asp of the receiver domain.

It localises to the endoplasmic reticulum membrane. It carries out the reaction ATP + protein L-histidine = ADP + protein N-phospho-L-histidine.. In terms of biological role, may act early in the ethylene signal transduction pathway, possibly as an ethylene receptor, or as a regulator of the pathway. The sequence is that of Ethylene receptor (ETR1) from Malus domestica (Apple).